Consider the following 339-residue polypeptide: MEPIHNPPPQTCSYSRPSTTYTSFKDASCGTKVTRIIIALFLIVISCGLILCAYTFRDLLDADYSAQEGPQQATKLLQQLDKVLTGPPLPIWDNEHLFQFSCLMQNKHRRVLPIDICNPLTKFNFLEYICNCLMTKQSVNVNETDMCELFCPPTCTPENYRRLLCTSSVFPFVMWHDPSADTQEAMLTKMDQTMSSGRVGNSHWVLVIVDIEHRCVTFFDSFYNYIASPQQMREQLEGLAASLGAIYPKEGGSDSDQEELLSPFQVRIGSTVKVQSPGEFTCGAWCCQFLAWYLENPDFDLEEKVPTNPSERRALLADFISTTEQAMSRYSSLSWPTTD.

The chain crosses the membrane as a helical span at residues 36 to 56 (IIIALFLIVISCGLILCAYTF). Active-site residues include His203, Asp220, and Cys282.

Belongs to the peptidase C48 family.

Its subcellular location is the secreted. It localises to the host cell. The protein resides in the membrane. Functionally, effector proteins function to alter host cell physiology and promote bacterial survival in host tissues. This protease possesses deubiquitinating and deneddylating activities. This is Deubiquitinase and deneddylase Dub2 (cdu2) from Chlamydia trachomatis serovar B (strain Jali20/OT).